The primary structure comprises 517 residues: Crotonobetaine/carnitine--CoA ligase (517 aa).

This sequence belongs to the ATP-dependent AMP-binding enzyme family.

It carries out the reaction 4-(trimethylamino)butanoate + ATP + CoA = 4-(trimethylamino)butanoyl-CoA + AMP + diphosphate. The enzyme catalyses crotonobetaine + ATP + CoA = crotonobetainyl-CoA + AMP + diphosphate. The catalysed reaction is (R)-carnitine + ATP + CoA = (R)-carnitinyl-CoA + AMP + diphosphate. It functions in the pathway amine and polyamine metabolism; carnitine metabolism. In terms of biological role, catalyzes the transfer of CoA to carnitine, generating the initial carnitinyl-CoA needed for the CaiB reaction cycle. Also has activity toward crotonobetaine and gamma-butyrobetaine. The sequence is that of Crotonobetaine/carnitine--CoA ligase from Salmonella agona (strain SL483).